The chain runs to 166 residues: UPF0304 protein PBPRA2768 (166 aa).

Belongs to the UPF0304 family.

In Photobacterium profundum (strain SS9), this protein is UPF0304 protein PBPRA2768.